A 297-amino-acid polypeptide reads, in one-letter code: Putative lipid kinase MamU (297 aa).

In terms of domain architecture, DAGKc spans 43-131; sequence EGKDMGRMVR…MDVGRVNDRY (89 aa). 68 to 74 provides a ligand contact to ATP; the sequence is GDGSLSR. Glu-274 functions as the Proton acceptor in the catalytic mechanism.

It belongs to the diacylglycerol/lipid kinase family.

Its subcellular location is the cytoplasm. Functionally, might phosphorylate lipids. The chain is Putative lipid kinase MamU from Magnetospirillum gryphiswaldense (strain DSM 6361 / JCM 21280 / NBRC 15271 / MSR-1).